Consider the following 193-residue polypeptide: Large ribosomal subunit protein bL21 (193 aa).

It belongs to the bacterial ribosomal protein bL21 family. As to quaternary structure, part of the 50S ribosomal subunit. Contacts protein L20.

This protein binds to 23S rRNA in the presence of protein L20. The polypeptide is Large ribosomal subunit protein bL21 (Ruegeria pomeroyi (strain ATCC 700808 / DSM 15171 / DSS-3) (Silicibacter pomeroyi)).